The primary structure comprises 831 residues: MNIEQKWQQIWQEEKAFEVPNESSKPKYYVLEMLPYPSGKIHVGHVRNYSIGDVVARFMTMQGFNVLHPMGWDSFGLPAENAAIKNNSHPKEWTYSNIENMKKQLKSMGFSYDWSREINSCDPDYYKHEQKFFLELYERNLAYQKESLVNWDPVDNTVLANEQVVDGRGWRSGAIVEKRYLKQWFLKITNYAEELLNEIPNLTEWPEAVRSMQEKWIGKSVGANFRFKIKDNEDVIEVFSTKPETIFGASFVGIAFNHPIIEKLVSKTPEIENFIAKCSNITGSAEFDKAEKEGIFTGLYVVHPFDSNITLPVVITNFVLMDYGTGAVFGCPAHDQRDHELAVKINLPIKQVIEADTDVQKAAYTEDGIIINSGFLNGLSTNEAKQRVIEEFEKLGIGKRTINYRLKDWGISRQRFWGCPIPIIHCDSCGLVPVPDSDLPVTLPDDVKFDGHGNPLDNHPTWKHVNCPKCSKPAIRETDTFDTFFESSWYFTRYCNSQALEMTDKKACDYWLPVDKYIGGIEHAVMHLLYARFFTKVMNEQDYVSVREPFKGLFTQGMVLHATYKDEHNNWLYPEEVIKKGNEFFHKENGGLVTQGRIEKMSKSKKNLIDLETMQQQYGADAIRFFVLSDSPPEKDLEWSASGIEGSARFINKLEQMQETIIKLSDNKNTNKELKRLIHFTIKHVAEDIKHFALNRAIARMRELFNAISSEINKEEIDVQNAKHGFNVLIQLLNPFIPHITEEIWQKLGHKTFLYNAAFPTFDESMLELDTYVIAVQVNGKLRDTYEFNTSASEDEIKQIAINLPKVQKFLEGKEPKKIILVPKKIINIIC.

The short motif at 35–45 (PYPSGKIHVGH) is the 'HIGH' region element. The short motif at 600-604 (KMSKS) is the 'KMSKS' region element. K603 is an ATP binding site.

The protein belongs to the class-I aminoacyl-tRNA synthetase family.

The protein resides in the cytoplasm. It catalyses the reaction tRNA(Leu) + L-leucine + ATP = L-leucyl-tRNA(Leu) + AMP + diphosphate. This chain is Leucine--tRNA ligase, found in Rickettsia bellii (strain RML369-C).